We begin with the raw amino-acid sequence, 400 residues long: Acetate kinase (400 aa).

Asn10 contributes to the Mg(2+) binding site. Lys17 is a binding site for ATP. Arg91 provides a ligand contact to substrate. Asp150 acts as the Proton donor/acceptor in catalysis. Residues 210–214 (HLGNG), 285–287 (DCR), and 333–337 (GIGEN) contribute to the ATP site. Glu387 contacts Mg(2+).

This sequence belongs to the acetokinase family. In terms of assembly, homodimer. Requires Mg(2+) as cofactor. Mn(2+) is required as a cofactor.

It localises to the cytoplasm. It carries out the reaction acetate + ATP = acetyl phosphate + ADP. It functions in the pathway metabolic intermediate biosynthesis; acetyl-CoA biosynthesis; acetyl-CoA from acetate: step 1/2. Functionally, catalyzes the formation of acetyl phosphate from acetate and ATP. Can also catalyze the reverse reaction. In Salmonella typhi, this protein is Acetate kinase.